We begin with the raw amino-acid sequence, 103 residues long: Large ribosomal subunit protein bL21 (103 aa).

The protein belongs to the bacterial ribosomal protein bL21 family. Part of the 50S ribosomal subunit. Contacts protein L20.

Its function is as follows. This protein binds to 23S rRNA in the presence of protein L20. This is Large ribosomal subunit protein bL21 from Nitrosospira multiformis (strain ATCC 25196 / NCIMB 11849 / C 71).